The primary structure comprises 1373 residues: DNA-directed RNA polymerase subunit beta (1373 aa).

It belongs to the RNA polymerase beta chain family. The RNAP catalytic core consists of 2 alpha, 1 beta, 1 beta' and 1 omega subunit. When a sigma factor is associated with the core the holoenzyme is formed, which can initiate transcription.

The catalysed reaction is RNA(n) + a ribonucleoside 5'-triphosphate = RNA(n+1) + diphosphate. DNA-dependent RNA polymerase catalyzes the transcription of DNA into RNA using the four ribonucleoside triphosphates as substrates. This is DNA-directed RNA polymerase subunit beta from Lawsonia intracellularis (strain PHE/MN1-00).